A 1025-amino-acid polypeptide reads, in one-letter code: Retinoblastoma-related protein (1025 aa).

Residues 1–20 (MEDHPPKPSIPTADASLSNH) are disordered. Positions 422–623 (TPVTTAMTTA…EKGSSMYNSL (202 aa)) are domain A. A pocket region spans residues 422–875 (TPVTTAMTTA…NEIFIPAVKP (454 aa)). A spacer region spans residues 624 to 744 (TVARPALSAE…PGAGGETCAE (121 aa)). A domain B region spans residues 745 to 875 (TAINVFFSKI…NEIFIPAVKP (131 aa)).

This sequence belongs to the retinoblastoma protein (RB) family.

It is found in the nucleus. Functionally, regulator of biological processes that recruits a histone deacetylase to control gene transcription. May play a role in the entry into mitosis, negatively regulating the cell proliferation. Formation of stable complexes with geminiviridae replication-associated proteins may create a cellular environment which favors viral DNA replication. This chain is Retinoblastoma-related protein (pRB), found in Camellia sinensis (Tea plant).